The chain runs to 196 residues: Shikimate kinase (196 aa).

32–37 (GAGKSA) serves as a coordination point for ATP. A Mg(2+)-binding site is contributed by Ser36. Substrate-binding residues include Asp54, Arg78, and Gly100. Arg138 lines the ATP pocket. Arg157 lines the substrate pocket. Arg174 contacts ATP.

This sequence belongs to the shikimate kinase family. In terms of assembly, monomer. Mg(2+) is required as a cofactor.

The protein resides in the cytoplasm. It carries out the reaction shikimate + ATP = 3-phosphoshikimate + ADP + H(+). Its pathway is metabolic intermediate biosynthesis; chorismate biosynthesis; chorismate from D-erythrose 4-phosphate and phosphoenolpyruvate: step 5/7. Functionally, catalyzes the specific phosphorylation of the 3-hydroxyl group of shikimic acid using ATP as a cosubstrate. The chain is Shikimate kinase from Rhizobium leguminosarum bv. trifolii (strain WSM2304).